The following is a 387-amino-acid chain: WD repeat-containing protein 55 (387 aa).

The segment covering 1–10 (MATPTEHEDL) has biased composition (basic and acidic residues). A disordered region spans residues 1–24 (MATPTEHEDLSEQEVTEDEFKTPK). 7 WD repeats span residues 33 to 72 (KLEAIVNTIAFHPKQDILAAGDIDGDIYLFSYSCTEGENK), 79 to 118 (HHLKSCRKVLFSSDGQKLFSVSKDKAIHIMDVEAGKLETR), 122 to 160 (AHKVPINAMLLIDENIFATGDDEGTLKVWDMRKGTSFMD), 163 to 202 (HHEDYISDITIDQAKRTLLTSSGDGTLGVFNIKRRRFELL), 205 to 244 (IQNGDLTSVSIMKRGRKVVCGSGEGTIYIFNWNGFGATSD), 247 to 286 (AVQAESVDCIVPITDSILCAASTDGVIRAINILPNRVVGS), and 290 to 329 (HVGEAIEEIARCRDTHFLASCAHDELIKFWDISSLPDEKV). The tract at residues 356–387 (FFAGLLDTTEENGKEGENDEDDDDEDSDSGSD) is disordered. Residues 372 to 387 (ENDEDDDDEDSDSGSD) are compositionally biased toward acidic residues.

It belongs to the WD repeat WDR55 family.

The protein resides in the nucleus. It is found in the nucleolus. Nucleolar protein that acts as a modulator of rRNA synthesis. Plays a central role during organogenesis. In Danio rerio (Zebrafish), this protein is WD repeat-containing protein 55 (wdr55).